Reading from the N-terminus, the 275-residue chain is 3-methyl-2-oxobutanoate hydroxymethyltransferase (275 aa).

2 residues coordinate Mg(2+): Asp44 and Asp83. Residues 44 to 45 (DS), Asp83, and Lys113 contribute to the 3-methyl-2-oxobutanoate site. A Mg(2+)-binding site is contributed by Glu115. Glu182 acts as the Proton acceptor in catalysis.

The protein belongs to the PanB family. As to quaternary structure, homodecamer; pentamer of dimers. Mg(2+) serves as cofactor.

The protein localises to the cytoplasm. It catalyses the reaction 3-methyl-2-oxobutanoate + (6R)-5,10-methylene-5,6,7,8-tetrahydrofolate + H2O = 2-dehydropantoate + (6S)-5,6,7,8-tetrahydrofolate. It functions in the pathway cofactor biosynthesis; (R)-pantothenate biosynthesis; (R)-pantoate from 3-methyl-2-oxobutanoate: step 1/2. Catalyzes the reversible reaction in which hydroxymethyl group from 5,10-methylenetetrahydrofolate is transferred onto alpha-ketoisovalerate to form ketopantoate. This is 3-methyl-2-oxobutanoate hydroxymethyltransferase from Clostridium botulinum (strain Kyoto / Type A2).